The chain runs to 601 residues: Probable translation initiation factor IF-2 (601 aa).

A tr-type G domain is found at Leu14–Met229. The tract at residues Gly23 to Thr30 is G1. Gly23 to Thr30 serves as a coordination point for GTP. The tract at residues Ala48–His52 is G2. The G3 stretch occupies residues Asp85–Gly88. GTP-binding positions include Asp85–His89 and Asn139–Asp142. Positions Asn139–Asp142 are G4. The segment at Ser207–Glu209 is G5.

The protein belongs to the TRAFAC class translation factor GTPase superfamily. Classic translation factor GTPase family. IF-2 subfamily.

Function in general translation initiation by promoting the binding of the formylmethionine-tRNA to ribosomes. Seems to function along with eIF-2. The protein is Probable translation initiation factor IF-2 of Haloarcula marismortui (strain ATCC 43049 / DSM 3752 / JCM 8966 / VKM B-1809) (Halobacterium marismortui).